Here is a 60-residue protein sequence, read N- to C-terminus: Cytotoxin 3 (60 aa).

4 disulfide bridges follow: C3-C21, C14-C38, C42-C53, and C54-C59.

It belongs to the three-finger toxin family. Short-chain subfamily. Type IA cytotoxin sub-subfamily. As to quaternary structure, monomer in solution; Homodimer and oligomer in the presence of negatively charged lipids forming a pore with a size ranging between 20 and 30 Angstroms. In terms of tissue distribution, expressed by the venom gland.

It localises to the secreted. The protein localises to the target cell membrane. Shows cytolytic activity on many different cells by forming pore in lipid membranes. In vivo, increases heart rate or kills the animal by cardiac arrest. In addition, it binds to heparin with high affinity, interacts with Kv channel-interacting protein 1 (KCNIP1) in a calcium-independent manner, and binds to integrin alpha-V/beta-3 (ITGAV/ITGB3) with moderate affinity. This chain is Cytotoxin 3, found in Naja mossambica (Mozambique spitting cobra).